Reading from the N-terminus, the 78-residue chain is Delta-conotoxin TxVIA (78 aa).

The first 22 residues, 1–22, serve as a signal peptide directing secretion; that stretch reads MKLTCMMIVAVLFLTAWTFATA. A propeptide spanning residues 23-49 is cleaved from the precursor; the sequence is DDSGNGLENLFSNAHHQMKNPEASKLN. Intrachain disulfides connect Cys53–Cys68, Cys60–Cys72, and Cys67–Cys77. Methionine sulfoxide; partial is present on Met59.

It belongs to the conotoxin O1 superfamily. In terms of tissue distribution, expressed by the venom duct. Is present in all duct parts with a highest content in part 4 (distal part near the pharynx).

It localises to the secreted. In terms of biological role, delta-conotoxins bind to site 6 of voltage-gated sodium channels (Nav) and inhibit the inactivation process. Binding of this toxin is strongly calcium-dependent but not voltage-dependent. The binding site is most likely on the extracellular side of the sodium channel. Binds receptor sites on both mollusk and rat central nervous system, but despite its high affinity binding to rat sodium channel, it has no functional effect in vivo and in vitro on it. Also has no effect on Gambusia fish. Is important in mollusk for the paralysis of the prey. Upon injection of the peptide, a subordinate lobster assumes an exaggerated dominant posture (of a 'King-Kong' lobster!). This is Delta-conotoxin TxVIA from Conus textile (Cloth-of-gold cone).